Here is a 73-residue protein sequence, read N- to C-terminus: UPF0235 protein SYO3AOP1_0257 (73 aa).

Belongs to the UPF0235 family.

This chain is UPF0235 protein SYO3AOP1_0257, found in Sulfurihydrogenibium sp. (strain YO3AOP1).